Consider the following 283-residue polypeptide: Small ribosomal subunit protein uS2B (283 aa).

A disordered region spans residues 254-283 (GQVGQSAWDEEGDWNTTGAAQTSDWANTVA). Residues 267-283 (WNTTGAAQTSDWANTVA) show a composition bias toward polar residues.

Belongs to the universal ribosomal protein uS2 family. In terms of assembly, component of the small ribosomal subunit. Mature ribosomes consist of a small (40S) and a large (60S) subunit. The 40S subunit contains about 33 different proteins and 1 molecule of RNA (18S). The 60S subunit contains about 49 different proteins and 3 molecules of RNA (25S, 5.8S and 5S). Interacts with rps21.

It localises to the cytoplasm. Its function is as follows. Required for the assembly and/or stability of the 40S ribosomal subunit. Required for the processing of the 20S rRNA-precursor to mature 18S rRNA in a late step of the maturation of 40S ribosomal subunits. The chain is Small ribosomal subunit protein uS2B (rps0b) from Schizosaccharomyces japonicus (strain yFS275 / FY16936) (Fission yeast).